A 132-amino-acid chain; its full sequence is Pro-MCH 2 (132 aa).

The first 24 residues, methionine 1–alanine 24, serve as a signal peptide directing secretion. Cysteines 120 and 129 form a disulfide.

It belongs to the melanin-concentrating hormone family. In terms of tissue distribution, pituitary gland. Produced in neurons of lateral basal hypothalamus which project both to the brain and to the neural lobe of the pituitary gland from where MCH is released.

Plays a role in skin pigmentation by antagonizing the action of melanotropin alpha. Induces melanin concentration within the melanophores. May participate in the control of the hypothalamo-pituitary adrenal gland axis by inhibiting the release of ACTH. This Oncorhynchus keta (Chum salmon) protein is Pro-MCH 2 (mch2).